A 105-amino-acid polypeptide reads, in one-letter code: Large ribosomal subunit protein eL30 (105 aa).

This sequence belongs to the eukaryotic ribosomal protein eL30 family.

The polypeptide is Large ribosomal subunit protein eL30 (RPL30) (Eremothecium gossypii (strain ATCC 10895 / CBS 109.51 / FGSC 9923 / NRRL Y-1056) (Yeast)).